The following is a 233-amino-acid chain: Orotidine 5'-phosphate decarboxylase (233 aa).

Residues Asp-9, Lys-31, 58-67 (DLKLHDIPNT), Thr-120, Arg-182, Gln-191, Gly-211, and Arg-212 contribute to the substrate site. Lys-60 functions as the Proton donor in the catalytic mechanism.

Belongs to the OMP decarboxylase family. Type 1 subfamily. Homodimer.

The enzyme catalyses orotidine 5'-phosphate + H(+) = UMP + CO2. It functions in the pathway pyrimidine metabolism; UMP biosynthesis via de novo pathway; UMP from orotate: step 2/2. Its function is as follows. Catalyzes the decarboxylation of orotidine 5'-monophosphate (OMP) to uridine 5'-monophosphate (UMP). In Listeria welshimeri serovar 6b (strain ATCC 35897 / DSM 20650 / CCUG 15529 / CIP 8149 / NCTC 11857 / SLCC 5334 / V8), this protein is Orotidine 5'-phosphate decarboxylase.